The primary structure comprises 531 residues: Dihydropyrimidinase (531 aa).

Residues His103, His105, and Lys193 each coordinate Zn(2+). N6-carboxylysine is present on Lys193. Tyr198 provides a ligand contact to substrate. Zn(2+) contacts are provided by His226 and His282. Ser332 serves as a coordination point for substrate. Asp359 serves as a coordination point for Zn(2+). Residue Asn380 coordinates substrate.

It belongs to the metallo-dependent hydrolases superfamily. Hydantoinase/dihydropyrimidinase family. In terms of assembly, homotetramer. Requires Zn(2+) as cofactor. In terms of processing, carboxylation allows a single lysine to coordinate two zinc ions.

It localises to the endoplasmic reticulum. It catalyses the reaction 5,6-dihydrouracil + H2O = 3-(carbamoylamino)propanoate + H(+). It functions in the pathway amino-acid biosynthesis; beta-alanine biosynthesis. In terms of biological role, catalyzes the second step of the reductive pyrimidine degradation, the reversible hydrolytic ring opening of dihydropyrimidines. Can catalyze the ring opening of 5,6-dihydrouracil to N-carbamoyl-alanine and of 5,6-dihydrothymine to N-carbamoyl-amino isobutyrate. Involved in the recycling of nitrogen from nucleobases to general nitrogen metabolism. The protein is Dihydropyrimidinase of Arabidopsis thaliana (Mouse-ear cress).